The sequence spans 77 residues: Conotoxin Cl6.15 (77 aa).

The N-terminal stretch at 1-19 is a signal peptide; the sequence is MKLSVKFLLFLMILPLIAG. The propeptide occupies 20–37; it reads EDMSDNDAPKSVDVQRNV. Disulfide bonds link Cys49/Cys61, Cys55/Cys66, and Cys60/Cys75.

The protein belongs to the conotoxin I1 superfamily. Expressed by the venom duct.

The protein localises to the secreted. The protein is Conotoxin Cl6.15 of Californiconus californicus (California cone).